The chain runs to 416 residues: Glutamyl-tRNA reductase (416 aa).

Substrate contacts are provided by residues Thr-49–Arg-52, Ser-105, Glu-110–Gln-112, and Gln-116. Cys-50 functions as the Nucleophile in the catalytic mechanism. Gly-185–Ile-190 serves as a coordination point for NADP(+).

The protein belongs to the glutamyl-tRNA reductase family. As to quaternary structure, homodimer.

It catalyses the reaction (S)-4-amino-5-oxopentanoate + tRNA(Glu) + NADP(+) = L-glutamyl-tRNA(Glu) + NADPH + H(+). The protein operates within porphyrin-containing compound metabolism; protoporphyrin-IX biosynthesis; 5-aminolevulinate from L-glutamyl-tRNA(Glu): step 1/2. Functionally, catalyzes the NADPH-dependent reduction of glutamyl-tRNA(Glu) to glutamate 1-semialdehyde (GSA). The sequence is that of Glutamyl-tRNA reductase from Shewanella sp. (strain MR-7).